Reading from the N-terminus, the 445-residue chain is Inward rectifier potassium channel 4 (445 aa).

Residues 1 to 55 (MHGHSRNGQAHVPRRKRRNRFVKKNGQCNVYFANLSNKSQRYMADIFTTCVDTRW) lie on the Cytoplasmic side of the membrane. A helical transmembrane segment spans residues 56–80 (RYMLMIFSAAFLVSWLFFGLLFWCI). Over 81–120 (AFFHGDLEASPGVPAAGGPAAGGGGAAPVAPKPCIMHVNG) the chain is Extracellular. Residues 91-111 (PGVPAAGGPAAGGGGAAPVAP) are val/Gly/Ala/Pro stretch. Residues 121 to 132 (FLGAFLFSVETQ) constitute an intramembrane region (helical; Pore-forming). The segment at residues 133 to 139 (TTIGYGF) is an intramembrane region (pore-forming). Positions 134–139 (TIGYGF) match the Selectivity filter motif. The Extracellular segment spans residues 140–148 (RCVTEECPL). The chain crosses the membrane as a helical span at residues 149-170 (AVIAVVVQSIVGCVIDSFMIGT). Residues 171–445 (IMAKMARPKK…NISYRRESAI (275 aa)) lie on the Cytoplasmic side of the membrane. Positions 443–445 (SAI) match the PDZ-binding motif.

Belongs to the inward rectifier-type potassium channel (TC 1.A.2.1) family. KCNJ4 subfamily. Homomultimeric and heteromultimeric association with KCNJ2 and KCNJ12. Interacts with DLG2 and DLG4. Associates, via its PDZ-recognition domain, with a complex containing LIN7A, LIN7B, LIN7C, DLG1, CASK and APBA1. Interacts with TAX1BP3. TAX1BP3 competes with LIN7 family members for KCNJ4 binding. Heart, skeletal muscle, and several different brain regions including the hippocampus.

Its subcellular location is the cell membrane. It localises to the postsynaptic cell membrane. The protein localises to the cytoplasmic vesicle membrane. It catalyses the reaction K(+)(in) = K(+)(out). Inward rectifier potassium channels are characterized by a greater tendency to allow potassium to flow into the cell rather than out of it. Their voltage dependence is regulated by the concentration of extracellular potassium; as external potassium is raised, the voltage range of the channel opening shifts to more positive voltages. The inward rectification is mainly due to the blockage of outward current by internal magnesium. Can be blocked by extracellular barium and cesium. The chain is Inward rectifier potassium channel 4 (KCNJ4) from Homo sapiens (Human).